A 251-amino-acid chain; its full sequence is Probable transcriptional regulatory protein MAB_2888c (251 aa).

The segment at 1-20 (MSGHSKWATTKHQKAVKDAR) is disordered.

Belongs to the TACO1 family.

It is found in the cytoplasm. The sequence is that of Probable transcriptional regulatory protein MAB_2888c from Mycobacteroides abscessus (strain ATCC 19977 / DSM 44196 / CCUG 20993 / CIP 104536 / JCM 13569 / NCTC 13031 / TMC 1543 / L948) (Mycobacterium abscessus).